A 259-amino-acid chain; its full sequence is Acetylglutamate kinase (259 aa).

Substrate-binding positions include 45 to 46 (GG), R67, and N159.

The protein belongs to the acetylglutamate kinase family. ArgB subfamily.

It localises to the cytoplasm. The catalysed reaction is N-acetyl-L-glutamate + ATP = N-acetyl-L-glutamyl 5-phosphate + ADP. The protein operates within amino-acid biosynthesis; L-arginine biosynthesis; N(2)-acetyl-L-ornithine from L-glutamate: step 2/4. Catalyzes the ATP-dependent phosphorylation of N-acetyl-L-glutamate. This is Acetylglutamate kinase from Aeromonas hydrophila subsp. hydrophila (strain ATCC 7966 / DSM 30187 / BCRC 13018 / CCUG 14551 / JCM 1027 / KCTC 2358 / NCIMB 9240 / NCTC 8049).